The sequence spans 477 residues: Dihydrolipoyl dehydrogenase 3 (477 aa).

FAD is bound by residues 39–47, K56, and A118; that span reads EKGEYGGAC. C47 and C52 are oxidised to a cystine. NAD(+) is bound by residues 186 to 190, E209, and 279 to 282; these read GAGYI and AVGR. Residues D322 and A330 each contribute to the FAD site. H454 acts as the Proton acceptor in catalysis.

The protein belongs to the class-I pyridine nucleotide-disulfide oxidoreductase family. In terms of assembly, homodimer. The cofactor is FAD.

It localises to the cytoplasm. The catalysed reaction is N(6)-[(R)-dihydrolipoyl]-L-lysyl-[protein] + NAD(+) = N(6)-[(R)-lipoyl]-L-lysyl-[protein] + NADH + H(+). This chain is Dihydrolipoyl dehydrogenase 3 (lpdA3), found in Haloarcula marismortui (strain ATCC 43049 / DSM 3752 / JCM 8966 / VKM B-1809) (Halobacterium marismortui).